A 323-amino-acid polypeptide reads, in one-letter code: MGQEKVTVSTRPLQWKCVESRADSKRLYYGRFLLAPLMRGQADTIGIAMRRALLGEIEGTCITRAKSEKIPHEYSTIVGIQESVHEILMNLKEIVLRSNLYGTRDASICVKGPGYVTAQDIILPPSVEIVDNTQHIANLTEPITLCIELQIERNRGYRIKTPNNFQNGSYPIDAVFMPVRNANHSIHSYVNGNENQEILFLEIWTNGSLTPKEALHEASRNLIDLFIPFFHAEEHLENNQHKGTLPLFNFHGRLAKPRKTKKEIALKYIYIDQSELPPRVYNCLKRSNINTFLELLNNSQEELMKIQDFRIEDVKHILDVLEI.

Residues 1–233 form an alpha N-terminal domain (alpha-NTD) region; sequence MGQEKVTVST…DLFIPFFHAE (233 aa). The interval 264–323 is alpha C-terminal domain (alpha-CTD); the sequence is IALKYIYIDQSELPPRVYNCLKRSNINTFLELLNNSQEELMKIQDFRIEDVKHILDVLEI.

This sequence belongs to the RNA polymerase alpha chain family. In plastids the minimal PEP RNA polymerase catalytic core is composed of four subunits: alpha, beta, beta', and beta''. When a (nuclear-encoded) sigma factor is associated with the core the holoenzyme is formed, which can initiate transcription.

It localises to the plastid. The protein localises to the chloroplast. The catalysed reaction is RNA(n) + a ribonucleoside 5'-triphosphate = RNA(n+1) + diphosphate. Functionally, DNA-dependent RNA polymerase catalyzes the transcription of DNA into RNA using the four ribonucleoside triphosphates as substrates. In Morus indica (Mulberry), this protein is DNA-directed RNA polymerase subunit alpha.